The primary structure comprises 376 residues: Probable tRNA sulfurtransferase (376 aa).

In terms of domain architecture, THUMP spans 51–152 (EENLKNLKYV…KNSVYVFDKS (102 aa)). ATP-binding positions include 170–171 (LI), 195–196 (TF), R252, G274, and Q283.

The protein belongs to the ThiI family.

Its subcellular location is the cytoplasm. It carries out the reaction [ThiI sulfur-carrier protein]-S-sulfanyl-L-cysteine + a uridine in tRNA + 2 reduced [2Fe-2S]-[ferredoxin] + ATP + H(+) = [ThiI sulfur-carrier protein]-L-cysteine + a 4-thiouridine in tRNA + 2 oxidized [2Fe-2S]-[ferredoxin] + AMP + diphosphate. The enzyme catalyses [ThiS sulfur-carrier protein]-C-terminal Gly-Gly-AMP + S-sulfanyl-L-cysteinyl-[cysteine desulfurase] + AH2 = [ThiS sulfur-carrier protein]-C-terminal-Gly-aminoethanethioate + L-cysteinyl-[cysteine desulfurase] + A + AMP + 2 H(+). It functions in the pathway cofactor biosynthesis; thiamine diphosphate biosynthesis. In terms of biological role, catalyzes the ATP-dependent transfer of a sulfur to tRNA to produce 4-thiouridine in position 8 of tRNAs, which functions as a near-UV photosensor. Also catalyzes the transfer of sulfur to the sulfur carrier protein ThiS, forming ThiS-thiocarboxylate. This is a step in the synthesis of thiazole, in the thiamine biosynthesis pathway. The sulfur is donated as persulfide by IscS. The chain is Probable tRNA sulfurtransferase from Mycoplasmopsis synoviae (strain 53) (Mycoplasma synoviae).